The chain runs to 188 residues: Calcium load-activated calcium channel (188 aa).

Topologically, residues 1–4 are lumenal; it reads MSTM. A helical membrane pass occupies residues 5–32; the sequence is FADTLLIVFISVCTALLAEGITWVLVYR. Residues 32 to 89 are a coiled coil; the sequence is RTDKYKRLKAEVEKQSKKLEKKKETITESAGRQQKKKIERQEEKLKNNNRDLSMVRMK. Residues 33 to 86 lie on the Cytoplasmic side of the membrane; sequence TDKYKRLKAEVEKQSKKLEKKKETITESAGRQQKKKIERQEEKLKNNNRDLSMV. Ser60 is modified (phosphoserine). Residues 87-106 traverse the membrane as a helical segment; it reads RMKSMFAIGFCFTALMGMFN. The Lumenal portion of the chain corresponds to 107–120; it reads SIFDGRVVAKLPFT. Residues 121–130 lie within the membrane without spanning it; the sequence is PLSYIQGLSH. Residues 131–140 are Lumenal-facing; that stretch reads RNLLGDDTTD. A helical transmembrane segment spans residues 141-162; that stretch reads CSFIFLYILCTMSIRQNIQKIL. Over 163–188 the chain is Cytoplasmic; it reads GLAPSRAATKQAGGFLGPPPPSGKFS. At Ser188 the chain carries Phosphoserine.

Belongs to the TMCO1 family. In terms of assembly, homodimer and homotetramer. Homodimer under resting conditions; forms homotetramers following ER calcium overload. Component of the GET- and EMC-like (GEL) complex, composed of RAB5IF/OPTI and TMCO1. The GEL complex is part of the multi-pass translocon (MPT) complex, composed of three subcomplexes, the GEL complex (composed of RAB5IF/OPTI and TMCO1), the BOS complex (composed of NCLN/Nicalin, NOMO1 and TMEM147) and the PAT complex (composed of WDR83OS/Asterix and CCDC47). The MPT complex associates with the SEC61 complex.

Its subcellular location is the endoplasmic reticulum membrane. The protein resides in the golgi apparatus membrane. It localises to the mitochondrion membrane. The catalysed reaction is Ca(2+)(in) = Ca(2+)(out). Endoplasmic reticulum (ER) calcium-selective channel preventing intracellular Ca2(+) stores from overfilling and maintaining calcium homeostasis in the ER. In response to endoplasmic reticulum (ER) Ca2(+) overloading, assembles into a homotetramer, forming a functional calcium-selective channel facilitating Ca2(+) release. Mediates ER Ca2(+) homeostasis in osteoblasts and plays a key role in bone formation, via the CaMKII-HDAC4-RUNX2 signaling axis. Component of the multi-pass translocon (MPT) complex that mediates insertion of multi-pass membrane proteins into the lipid bilayer of membranes. The MPT complex takes over after the SEC61 complex: following membrane insertion of the first few transmembrane segments of proteins by the SEC61 complex, the MPT complex occludes the lateral gate of the SEC61 complex to promote insertion of subsequent transmembrane regions. Within the MPT complex, the GEL subcomplex may mediate insertion of transmembrane regions into the membrane. This chain is Calcium load-activated calcium channel, found in Bos taurus (Bovine).